Here is a 362-residue protein sequence, read N- to C-terminus: tRNA 2-selenouridine synthase (362 aa).

The 124-residue stretch at 14–137 (LANETPIIDV…LRQATIEMTN (124 aa)) folds into the Rhodanese domain. Residue Cys97 is the S-selanylcysteine intermediate of the active site.

Belongs to the SelU family. Monomer.

It carries out the reaction 5-methylaminomethyl-2-thiouridine(34) in tRNA + selenophosphate + (2E)-geranyl diphosphate + H2O + H(+) = 5-methylaminomethyl-2-selenouridine(34) in tRNA + (2E)-thiogeraniol + phosphate + diphosphate. The catalysed reaction is 5-methylaminomethyl-2-thiouridine(34) in tRNA + (2E)-geranyl diphosphate = 5-methylaminomethyl-S-(2E)-geranyl-thiouridine(34) in tRNA + diphosphate. The enzyme catalyses 5-methylaminomethyl-S-(2E)-geranyl-thiouridine(34) in tRNA + selenophosphate + H(+) = 5-methylaminomethyl-2-(Se-phospho)selenouridine(34) in tRNA + (2E)-thiogeraniol. It catalyses the reaction 5-methylaminomethyl-2-(Se-phospho)selenouridine(34) in tRNA + H2O = 5-methylaminomethyl-2-selenouridine(34) in tRNA + phosphate. Functionally, involved in the post-transcriptional modification of the uridine at the wobble position (U34) of tRNA(Lys), tRNA(Glu) and tRNA(Gln). Catalyzes the conversion of 2-thiouridine (S2U-RNA) to 2-selenouridine (Se2U-RNA). Acts in a two-step process involving geranylation of 2-thiouridine (S2U) to S-geranyl-2-thiouridine (geS2U) and subsequent selenation of the latter derivative to 2-selenouridine (Se2U) in the tRNA chain. The chain is tRNA 2-selenouridine synthase from Proteus mirabilis (strain HI4320).